A 499-amino-acid polypeptide reads, in one-letter code: Chitinase B (499 aa).

The signal sequence occupies residues Met1–Ala41. Positions Lys42–Ala425 constitute a GH18 domain. Residues Asp68–Ala69 and Gly95–Tyr98 each bind chitin. Catalysis depends on Glu144, which acts as the Proton donor. Chitin-binding positions include Tyr145, Met212 to Asp215, and Trp403. A Chitin-binding type-3 domain is found at Leu438–Leu498.

The protein belongs to the glycosyl hydrolase 18 family. Chitinase class II subfamily.

It catalyses the reaction Random endo-hydrolysis of N-acetyl-beta-D-glucosaminide (1-&gt;4)-beta-linkages in chitin and chitodextrins.. The chain is Chitinase B (chiB) from Serratia marcescens.